A 689-amino-acid polypeptide reads, in one-letter code: Glycine--tRNA ligase beta subunit (689 aa).

It belongs to the class-II aminoacyl-tRNA synthetase family. As to quaternary structure, tetramer of two alpha and two beta subunits.

The protein resides in the cytoplasm. The enzyme catalyses tRNA(Gly) + glycine + ATP = glycyl-tRNA(Gly) + AMP + diphosphate. The sequence is that of Glycine--tRNA ligase beta subunit from Shewanella baltica (strain OS195).